Consider the following 864-residue polypeptide: DNA double-strand break repair Rad50 ATPase (864 aa).

ATP-binding positions include 32 to 38 (NGAGKSS) and Gln-131. 2 coiled-coil regions span residues 176 to 319 (RELD…EKAI) and 376 to 413 (DIDK…EKNE). The Zinc-hook domain maps to 380–478 (VNSLEQKVEE…ELNKIEREYR (99 aa)). Zn(2+) is bound by residues Cys-426 and Cys-429. Residues 440-697 (KIIKEAKSYI…DREKIINAIN (258 aa)) are a coiled coil.

This sequence belongs to the SMC family. RAD50 subfamily. As to quaternary structure, homodimer. Forms a heterotetramer composed of two Mre11 subunits and two Rad50 subunits. Zn(2+) is required as a cofactor.

Part of the Rad50/Mre11 complex, which is involved in the early steps of DNA double-strand break (DSB) repair. The complex may facilitate opening of the processed DNA ends to aid in the recruitment of HerA and NurA. Rad50 controls the balance between DNA end bridging and DNA resection via ATP-dependent structural rearrangements of the Rad50/Mre11 complex. This chain is DNA double-strand break repair Rad50 ATPase, found in Saccharolobus solfataricus (strain ATCC 35092 / DSM 1617 / JCM 11322 / P2) (Sulfolobus solfataricus).